Consider the following 239-residue polypeptide: tRNA (guanine-N(7)-)-methyltransferase (239 aa).

4 residues coordinate S-adenosyl-L-methionine: E69, E94, D121, and D144. D144 is an active-site residue. K148 contacts substrate. Positions 150–155 (RHNKRR) are interaction with RNA. Residues D180 and 217–220 (TKFE) contribute to the substrate site.

Belongs to the class I-like SAM-binding methyltransferase superfamily. TrmB family. In terms of assembly, monomer.

It carries out the reaction guanosine(46) in tRNA + S-adenosyl-L-methionine = N(7)-methylguanosine(46) in tRNA + S-adenosyl-L-homocysteine. Its pathway is tRNA modification; N(7)-methylguanine-tRNA biosynthesis. Catalyzes the formation of N(7)-methylguanine at position 46 (m7G46) in tRNA. In Yersinia pseudotuberculosis serotype O:1b (strain IP 31758), this protein is tRNA (guanine-N(7)-)-methyltransferase.